A 298-amino-acid chain; its full sequence is Aspartate carbamoyltransferase catalytic subunit (298 aa).

R50 and T51 together coordinate carbamoyl phosphate. Residue K79 participates in L-aspartate binding. 3 residues coordinate carbamoyl phosphate: R100, H128, and Q131. Positions 160 and 221 each coordinate L-aspartate. Residues L260 and P261 each contribute to the carbamoyl phosphate site.

The protein belongs to the aspartate/ornithine carbamoyltransferase superfamily. ATCase family. As to quaternary structure, heterooligomer of catalytic and regulatory chains.

The enzyme catalyses carbamoyl phosphate + L-aspartate = N-carbamoyl-L-aspartate + phosphate + H(+). Its pathway is pyrimidine metabolism; UMP biosynthesis via de novo pathway; (S)-dihydroorotate from bicarbonate: step 2/3. Catalyzes the condensation of carbamoyl phosphate and aspartate to form carbamoyl aspartate and inorganic phosphate, the committed step in the de novo pyrimidine nucleotide biosynthesis pathway. The chain is Aspartate carbamoyltransferase catalytic subunit from Methanospirillum hungatei JF-1 (strain ATCC 27890 / DSM 864 / NBRC 100397 / JF-1).